A 347-amino-acid chain; its full sequence is NADH-ubiquinone oxidoreductase chain 2 (347 aa).

11 helical membrane passes run 3–23, 25–45, 59–79, 96–116, 122–142, 148–168, 178–198, 202–222, 240–260, 276–296, and 326–346; these read PLILLLITLTVILGTLIVMMS, HWLMIWMGFEMNMLAVIPLLM, YFLTQATASMLLMLAIIINLM, IIMTLALMMKLGLAPFHFWVP, ISLTSGLILLTWQKLAPLSIL, VINPDLLLMASMLSIAIGGWG, ILAYSSIAHMGWMMSVLAFNP, LLNLFMYILMTSTTFMLFMVA, ITTSILIMMLSLGGLPPLAGF, IILATLMAITALLNLFFYIRL, and LPPLIIMSTLTLPLAPAMILL.

This sequence belongs to the complex I subunit 2 family. In terms of assembly, core subunit of respiratory chain NADH dehydrogenase (Complex I) which is composed of 45 different subunits. Interacts with TMEM242.

It is found in the mitochondrion inner membrane. It catalyses the reaction a ubiquinone + NADH + 5 H(+)(in) = a ubiquinol + NAD(+) + 4 H(+)(out). Its function is as follows. Core subunit of the mitochondrial membrane respiratory chain NADH dehydrogenase (Complex I) which catalyzes electron transfer from NADH through the respiratory chain, using ubiquinone as an electron acceptor. Essential for the catalytic activity and assembly of complex I. This chain is NADH-ubiquinone oxidoreductase chain 2, found in Peropteryx kappleri (Greater dog-like bat).